We begin with the raw amino-acid sequence, 500 residues long: Putative beta-glucosidase 5 (500 aa).

A signal peptide spans 1-20 (MEQFFALFTIFLSFAFPGRC). A beta-D-glucoside is bound by residues Gln43, His140, and 185–186 (NE). The active-site Proton donor is Glu186. A disulfide bridge connects residues Cys205 and Cys212. Asn216 carries an N-linked (GlcNAc...) asparagine glycan. Tyr328 provides a ligand contact to a beta-D-glucoside. A glycan (N-linked (GlcNAc...) asparagine) is linked at Asn361. Glu394 provides a ligand contact to a beta-D-glucoside. The Nucleophile role is filled by Glu394. N-linked (GlcNAc...) asparagine glycosylation occurs at Asn424. Positions 434 and 450 each coordinate a beta-D-glucoside. N-linked (GlcNAc...) asparagine glycans are attached at residues Asn456 and Asn495.

The protein belongs to the glycosyl hydrolase 1 family.

The enzyme catalyses Hydrolysis of terminal, non-reducing beta-D-glucosyl residues with release of beta-D-glucose.. The chain is Putative beta-glucosidase 5 from Arabidopsis thaliana (Mouse-ear cress).